The primary structure comprises 244 residues: Inner kinetochore subunit fta7 (244 aa).

The protein belongs to the CENP-Q/OKP1 family. In terms of assembly, component of the heterotetrameric kinetochore subcomplex COMA, which consists of fta2, fta7, mal2 and mis17. The COMA subcomplex is part of a larger constitutive centromere-associated network (CCAN) (also known as central kinetochore Sim4 complex in fission yeast), which is composed of at least cnl2, cnp3, cnp20, fta1, fta2, fta3, fta4, fta6, fta7, mal2, mhf1, mhf2, mis6, mis15, mis17, sim4 and wip1.

Its subcellular location is the nucleus. It is found in the chromosome. The protein resides in the centromere. The protein localises to the kinetochore. It localises to the cytoplasm. Its subcellular location is the cytoskeleton. It is found in the microtubule organizing center. The protein resides in the spindle pole body. Its function is as follows. Component of the kinetochore, a multiprotein complex that assembles on centromeric DNA and attaches chromosomes to spindle microtubules, mediating chromosome segregation and sister chromatid segregation during meiosis and mitosis. Component of the inner kinetochore COMA complex, which connects centromere-associated proteins and the outer kinetochore. COMA interacts with other inner kinetochore proteins to form the inner kinetochore constitutive centromere-associated network (CCAN), which serves as a structural platform for outer kinetochore assembly. This chain is Inner kinetochore subunit fta7 (fta7), found in Schizosaccharomyces pombe (strain 972 / ATCC 24843) (Fission yeast).